Here is a 215-residue protein sequence, read N- to C-terminus: Pyrrolidone-carboxylate peptidase 1 (215 aa).

Active-site residues include glutamate 80, cysteine 143, and histidine 167.

It belongs to the peptidase C15 family. Homotetramer.

The protein localises to the cytoplasm. It carries out the reaction Release of an N-terminal pyroglutamyl group from a polypeptide, the second amino acid generally not being Pro.. In terms of biological role, removes 5-oxoproline from various penultimate amino acid residues except L-proline. This Ralstonia nicotianae (strain ATCC BAA-1114 / GMI1000) (Ralstonia solanacearum) protein is Pyrrolidone-carboxylate peptidase 1.